The chain runs to 236 residues: Small ribosomal subunit protein uS3 (236 aa).

Residues 39–107 (IREFLTEELK…DTSLNIVEVR (69 aa)) enclose the KH type-2 domain. The segment at 214 to 236 (ASERRAVEGDNQGSSSNRRRENA) is disordered.

The protein belongs to the universal ribosomal protein uS3 family. As to quaternary structure, part of the 30S ribosomal subunit. Forms a tight complex with proteins S10 and S14.

In terms of biological role, binds the lower part of the 30S subunit head. Binds mRNA in the 70S ribosome, positioning it for translation. The polypeptide is Small ribosomal subunit protein uS3 (Brucella melitensis biotype 1 (strain ATCC 23456 / CCUG 17765 / NCTC 10094 / 16M)).